Reading from the N-terminus, the 213-residue chain is Small ribosomal subunit protein uS5 (213 aa).

Residues 1–42 (MSERDRNGGRSADNNRNDRNERGGRNDRGGRNDRRNNQQDER) form a disordered region. In terms of domain architecture, S5 DRBM spans 45 to 108 (YIERVVTINR…EEARKNFFRV (64 aa)).

The protein belongs to the universal ribosomal protein uS5 family. Part of the 30S ribosomal subunit. Contacts proteins S4 and S8.

In terms of biological role, with S4 and S12 plays an important role in translational accuracy. Functionally, located at the back of the 30S subunit body where it stabilizes the conformation of the head with respect to the body. The protein is Small ribosomal subunit protein uS5 of Corynebacterium urealyticum (strain ATCC 43042 / DSM 7109).